The following is a 294-amino-acid chain: Nucleotide-binding protein LCA_0526 (294 aa).

12 to 19 is an ATP binding site; that stretch reads GMSGAGKT. GTP is bound at residue 62–65; sequence DLRS.

It belongs to the RapZ-like family.

Its function is as follows. Displays ATPase and GTPase activities. The protein is Nucleotide-binding protein LCA_0526 of Latilactobacillus sakei subsp. sakei (strain 23K) (Lactobacillus sakei subsp. sakei).